A 513-amino-acid chain; its full sequence is Transcription factor SOX-9 (513 aa).

Disordered stretches follow at residues 1–67 and 160–273; these read MNLL…SEED and RLRV…FRDV. A compositionally biased stretch (low complexity) spans 30–41; sequence SAGSPCPSGSGS. Residues 42–52 show a composition bias toward polar residues; it reads DTENTRPQENT. 2 stretches are compositionally biased toward basic and acidic residues: residues 56–67 and 160–174; these read GEPDLKKESEED and RLRVQHKKDHPDYKY. Residues 63–103 form a dimerization (DIM) region; sequence ESEEDKFPVCIREAVSQVLKGYDWTLVPMPVRVNGSSKNKP. The tract at residues 63–103 is PQA; it reads ESEEDKFPVCIREAVSQVLKGYDWTLVPMPVRVNGSSKNKP. Ser-64 carries the phosphoserine modification. The HMG box DNA-binding region spans 105-173; sequence VKRPMNAFMV…QHKKDHPDYK (69 aa). Ser-211 is modified (phosphoserine). The segment at 224-307 is transactivation domain (TAM); it reads PGKHSGQSQG…LPPNGHPGVP (84 aa). 2 short sequence motifs (9aaTAD) span residues 275 to 284 and 290 to 298; these read IGELSSDVIS and DVNEFDQYL. The segment at 334-447 is disordered; sequence VWMSKQQAPP…PITRSQYDYT (114 aa). Residues 341-380 are compositionally biased toward pro residues; the sequence is APPPPPPPPQQSPQAPPQPPQAPPQAPQAPPQPQPAPPQP. Residues 387–423 show a composition bias toward polar residues; it reads TPLSSEPGQAQRTHIKTEQLSPSHYSEQQQHSPQQIA. Residues 398-513 form a transactivation domain (TAC) region; sequence RTHIKTEQLS…QPVYTQLTRP (116 aa). Lys-402 participates in a covalent cross-link: Glycyl lysine isopeptide (Lys-Gly) (interchain with G-Cter in ubiquitin). The 9aaTAD 3 motif lies at 464–472; that stretch reads SSLYSTFTY. The disordered stretch occupies residues 483 to 513; sequence PIADTSGVPSIPQTHSPQHWEQPVYTQLTRP. A compositionally biased stretch (polar residues) spans 489 to 513; it reads GVPSIPQTHSPQHWEQPVYTQLTRP.

As to quaternary structure, homodimer; homodimerization is required for activity. Interacts (via C-terminus) with ZNF219; forming a complex that binds to the COL2A1 promoter and activates COL2A1 expression. Interacts with DDRGK1. Interacts with EP300/p300. Interacts with beta-catenin (CTNNB1); inhibiting CTNNB1 activity by competing with the binding sites of TCF/LEF within CTNNB1. In terms of processing, acetylated; acetylation impairs nuclear localization and ability to transactivate expression of target genes. Deacetylated by SIRT1. Phosphorylation at Ser-64 and Ser-211 by PKA increases transcriptional activity and may help delay chondrocyte maturation downstream of PTHLH/PTHrP signaling. Phosphorylation at either Ser-64 or Ser-211 is required for sumoylation, but phosphorylation is not dependent on sumoylation. Phosphorylated on tyrosine residues; tyrosine dephosphorylation by PTPN11/SHP2 blocks SOX9 phosphorylation by PKA and subsequent SUMOylation. Post-translationally, sumoylated; phosphorylation at either Ser-64 or Ser-211 is required for sumoylation. Sumoylation is induced by BMP signaling pathway. In terms of processing, ubiquitinated; ubiquitination leads to proteasomal degradation and is negatively regulated by DDRGK1.

The protein resides in the nucleus. Transcription factor that plays a key role in chondrocytes differentiation and skeletal development. Specifically binds the 5'-ACAAAG-3' DNA motif present in enhancers and super-enhancers and promotes expression of genes important for chondrogenesis, including cartilage matrix protein-coding genes COL2A1, COL4A2, COL9A1, COL11A2 and ACAN, SOX5 and SOX6. Also binds to some promoter regions. Plays a central role in successive steps of chondrocyte differentiation. Absolutely required for precartilaginous condensation, the first step in chondrogenesis during which skeletal progenitors differentiate into prechondrocytes. Together with SOX5 and SOX6, required for overt chondrogenesis when condensed prechondrocytes differentiate into early stage chondrocytes, the second step in chondrogenesis. Later, required to direct hypertrophic maturation and block osteoblast differentiation of growth plate chondrocytes: maintains chondrocyte columnar proliferation, delays prehypertrophy and then prevents osteoblastic differentiation of chondrocytes by lowering beta-catenin (CTNNB1) signaling and RUNX2 expression. Also required for chondrocyte hypertrophy, both indirectly, by keeping the lineage fate of chondrocytes, and directly, by remaining present in upper hypertrophic cells and transactivating COL10A1 along with MEF2C. Low lipid levels are the main nutritional determinant for chondrogenic commitment of skeletal progenitor cells: when lipids levels are low, FOXO (FOXO1 and FOXO3) transcription factors promote expression of SOX9, which induces chondrogenic commitment and suppresses fatty acid oxidation. Mechanistically, helps, but is not required, to remove epigenetic signatures of transcriptional repression and deposit active promoter and enhancer marks at chondrocyte-specific genes. Acts in cooperation with the Hedgehog pathway-dependent GLI (GLI1 and GLI3) transcription factors. In addition to cartilage development, also acts as a regulator of proliferation and differentiation in epithelial stem/progenitor cells: involved in the lung epithelium during branching morphogenesis, by balancing proliferation and differentiation and regulating the extracellular matrix. Controls epithelial branching during kidney development. This is Transcription factor SOX-9 (SOX9) from Canis lupus familiaris (Dog).